Here is a 374-residue protein sequence, read N- to C-terminus: Guanine nucleotide-binding protein subunit alpha-15 (374 aa).

The region spanning glycine 41–leucine 374 is the G-alpha domain. A G1 motif region spans residues lysine 44 to threonine 57. GTP contacts are provided by residues glycine 49–serine 56, leucine 183–threonine 189, aspartate 208–glutamine 212, asparagine 277–aspartate 280, and alanine 346. Serine 56 serves as a coordination point for Mg(2+). The tract at residues aspartate 181–threonine 189 is G2 motif. ADP-ribosylarginine; by cholera toxin is present on arginine 186. A Mg(2+)-binding site is contributed by threonine 189. Residues leucine 204–lysine 213 are G3 motif. Residues isoleucine 273–aspartate 280 form a G4 motif region. A G5 motif region spans residues threonine 344–threonine 349.

This sequence belongs to the G-alpha family. G(q) subfamily. In terms of assembly, g proteins are composed of 3 units; alpha, beta and gamma. The alpha chain contains the guanine nucleotide binding site. As to expression, specifically expressed in hematopoietic cells. Expressed in epididymis (at protein level).

Functionally, guanine nucleotide-binding proteins (G proteins) are involved as modulators or transducers in various transmembrane signaling systems. In Homo sapiens (Human), this protein is Guanine nucleotide-binding protein subunit alpha-15 (GNA15).